The sequence spans 193 residues: Ion-translocating oxidoreductase complex subunit A (193 aa).

The next 6 helical transmembrane spans lie at 5-25 (LLLFVGTVLVNNFVLVKFLGL), 39-59 (MGMGLATTFVMTLASICAWLI), 63-83 (ILIPLNLIYLRTLAFILVIAV), 102-122 (LLGIFLPLITTNCAVLGVALL), 134-154 (ALYGFSAAVGFSLVMVLFAAI), and 171-191 (AIALITAGLMSLAFMGFSGLV).

The protein belongs to the NqrDE/RnfAE family. As to quaternary structure, the complex is composed of six subunits: RsxA, RsxB, RsxC, RsxD, RsxE and RsxG.

Its subcellular location is the cell inner membrane. Part of a membrane-bound complex that couples electron transfer with translocation of ions across the membrane. Required to maintain the reduced state of SoxR. In Shigella boydii serotype 18 (strain CDC 3083-94 / BS512), this protein is Ion-translocating oxidoreductase complex subunit A.